Consider the following 458-residue polypeptide: Peptidyl-prolyl cis-trans isomerase FKBP4 (458 aa).

The residue at position 1 (Met1) is an N-acetylmethionine; in peptidyl-prolyl cis-trans isomerase FKBP4; alternate. N-acetylthreonine; in peptidyl-prolyl cis-trans isomerase FKBP4, N-terminally processed; partial is present on Thr2. Positions 50–138 (GDRVFVHYTG…VFEVELFEFK (89 aa)) constitute a PPIase FKBP-type 1 domain. Thr143 is subject to Phosphothreonine; by CK2. One can recognise a PPIase FKBP-type 2 domain in the interval 167-253 (GAMVEVALEG…RYEVHLKSFE (87 aa)). Residue Tyr220 is modified to Phosphotyrosine. The segment at 267 to 400 (LEQSNIVKER…TQLAVCQQRT (134 aa)) is interaction with tubulin. TPR repeat units follow at residues 270-303 (SNIV…LEYE), 319-352 (LASH…DSNN), and 353-386 (EKGL…YPSN). N6-acetyllysine is present on Lys282. At Arg373 the chain carries Omega-N-methylarginine. Residues 423 to 458 (HKAKTEVAAGDHPTDAEMKGEPNNVAGNQAQVKTEA) form a disordered region. Thr436 bears the Phosphothreonine mark. A Glycyl lysine isopeptide (Lys-Gly) (interchain with G-Cter in SUMO1) cross-link involves residue Lys441. Polar residues predominate over residues 447-458 (VAGNQAQVKTEA).

Homodimer. Interacts with GLMN. Associates with HSP90AA1 and HSP70 in steroid hormone receptor complexes. Also interacts with peroxisomal phytanoyl-CoA alpha-hydroxylase (PHYH). Interacts with NR3C1 and dynein. Interacts with HSF1 in the HSP90 complex. Associates with tubulin. Interacts with MAPT/TAU. Interacts (via TPR domain) with S100A1, S100A2 and S100A6; the interaction is Ca(2+) dependent. Interaction with S100A1 and S100A2 (but not with S100A6) leads to inhibition of FKBP4-HSP90 interaction. Interacts with dynein; causes partially NR3C1 transport to the nucleus. Post-translationally, phosphorylation by CK2 results in loss of HSP90 binding activity. Widely detected in the brain (at protein level).

It localises to the cytoplasm. The protein resides in the cytosol. Its subcellular location is the mitochondrion. The protein localises to the nucleus. It is found in the cytoskeleton. It localises to the cell projection. The protein resides in the axon. It carries out the reaction [protein]-peptidylproline (omega=180) = [protein]-peptidylproline (omega=0). With respect to regulation, inhibited by FK506. Functionally, immunophilin protein with PPIase and co-chaperone activities. Component of unligated steroid receptors heterocomplexes through interaction with heat-shock protein 90 (HSP90). Plays a role in the intracellular trafficking of heterooligomeric forms of steroid hormone receptors between cytoplasm and nuclear compartments. May have a protective role against oxidative stress in mitochondria. Also acts as a regulator of microtubule dynamics by inhibiting MAPT/TAU ability to promote microtubule assembly. The PPIase activity controls neuronal growth cones via regulation of TRPC1 channel opening. The polypeptide is Peptidyl-prolyl cis-trans isomerase FKBP4 (Fkbp4) (Rattus norvegicus (Rat)).